The primary structure comprises 1029 residues: Protein STABILIZED1 (1029 aa).

A Ubiquitin-like domain is found at methionine 1 to glycine 85. Glycine 85 participates in a covalent cross-link: Glycyl lysine isopeptide (Gly-Lys) (interchain with K-? in acceptor proteins). Residues alanine 142 to aspartate 170 are disordered. Residues aspartate 210–lysine 243 adopt a coiled-coil conformation. HAT repeat units lie at residues tyrosine 367–valine 399, glycine 401–alanine 431, asparagine 432–histidine 462, aspartate 463–glutamate 494, aspartate 496–tyrosine 524, glutamate 526–alanine 554, glycine 639–serine 671, glycine 673–leucine 705, glycine 707–glutamate 739, lysine 741–glutamate 772, glycine 774–arginine 806, lysine 808–lysine 840, asparagine 842–arginine 874, aspartate 876–arginine 908, and lysine 940–glutamine 972. The stretch at lysine 625–lysine 658 is one TPR 1 repeat. One copy of the TPR 2 repeat lies at phenylalanine 794 to cysteine 827. A TPR 3 repeat occupies proline 926–isoleucine 959.

Component of a pre-mRNA splicing complex. Interacts with ZOP1. Interacts with PRP31. In terms of tissue distribution, ubiquitous.

The protein resides in the nucleus. It localises to the cajal body. In terms of biological role, pre-mRNA splicing factor required for splicing and for the turnover of unstable transcripts. May be a U5 snRNP-associated protein involved in the formation of U4/U6-U5 tri-snRNP. Involved in responses to abiotic stresses. Involved in microRNAs (miRNAs) biogenesis by functioning in primary miRNAs (pri-miRNAs) splicing. Required for DNA methylation and transcriptional silencing through the RNA-directed DNA methylation (RdDM) pathway. The chain is Protein STABILIZED1 (STA1) from Arabidopsis thaliana (Mouse-ear cress).